Consider the following 967-residue polypeptide: Isoleucine--tRNA ligase (967 aa).

The short motif at 68 to 78 is the 'HIGH' region element; that stretch reads PYANGTLHMGH. Glu583 contacts L-isoleucyl-5'-AMP. The short motif at 624-628 is the 'KMSKS' region element; it reads KMSKS. Lys627 lines the ATP pocket. Residues Cys937, Cys940, Cys957, and Cys960 each coordinate Zn(2+).

This sequence belongs to the class-I aminoacyl-tRNA synthetase family. IleS type 1 subfamily. Monomer. The cofactor is Zn(2+).

The protein resides in the cytoplasm. It catalyses the reaction tRNA(Ile) + L-isoleucine + ATP = L-isoleucyl-tRNA(Ile) + AMP + diphosphate. Its function is as follows. Catalyzes the attachment of isoleucine to tRNA(Ile). As IleRS can inadvertently accommodate and process structurally similar amino acids such as valine, to avoid such errors it has two additional distinct tRNA(Ile)-dependent editing activities. One activity is designated as 'pretransfer' editing and involves the hydrolysis of activated Val-AMP. The other activity is designated 'posttransfer' editing and involves deacylation of mischarged Val-tRNA(Ile). In Prochlorococcus marinus (strain NATL1A), this protein is Isoleucine--tRNA ligase.